The chain runs to 124 residues: Large ribosomal subunit protein bL12 (124 aa).

Belongs to the bacterial ribosomal protein bL12 family. Homodimer. Part of the ribosomal stalk of the 50S ribosomal subunit. Forms a multimeric L10(L12)X complex, where L10 forms an elongated spine to which 2 to 4 L12 dimers bind in a sequential fashion. Binds GTP-bound translation factors.

Functionally, forms part of the ribosomal stalk which helps the ribosome interact with GTP-bound translation factors. Is thus essential for accurate translation. In Burkholderia thailandensis (strain ATCC 700388 / DSM 13276 / CCUG 48851 / CIP 106301 / E264), this protein is Large ribosomal subunit protein bL12.